The sequence spans 755 residues: Polyribonucleotide nucleotidyltransferase (755 aa).

Mg(2+) contacts are provided by D482 and D488. One can recognise a KH domain in the interval 549–608 (PRMVSFYIDKDKISAAIGAKGKNIRSVCERSNAKIEIGDDGKVSVFAMSSAEAEIAKNMM). The 69-residue stretch at 618-686 (GAIVDVKVVK…KGGCPKLSRR (69 aa)) folds into the S1 motif domain. A compositionally biased stretch (basic and acidic residues) spans 702 to 714 (NEEKKDSSNDRDY). A disordered region spans residues 702-755 (NEEKKDSSNDRDYYNSPFNRKSGHRKRPVHSRSSFSNRNNRPKFGNDDSSSSFY). Residues 722–731 (KSGHRKRPVH) are compositionally biased toward basic residues.

This sequence belongs to the polyribonucleotide nucleotidyltransferase family. It depends on Mg(2+) as a cofactor.

The protein localises to the cytoplasm. It carries out the reaction RNA(n+1) + phosphate = RNA(n) + a ribonucleoside 5'-diphosphate. Involved in mRNA degradation. Catalyzes the phosphorolysis of single-stranded polyribonucleotides processively in the 3'- to 5'-direction. This chain is Polyribonucleotide nucleotidyltransferase, found in Wolbachia sp. subsp. Brugia malayi (strain TRS).